The primary structure comprises 71 residues: Disintegrin halysin (71 aa).

One can recognise a Disintegrin domain in the interval 1–71 (EAGEECDCGS…ISAGCPRNPF (71 aa)). 6 disulfides stabilise this stretch: Cys6–Cys21, Cys8–Cys16, Cys15–Cys38, Cys29–Cys35, Cys34–Cys59, and Cys47–Cys66. The short motif at 51–53 (RGD) is the Cell attachment site element.

Belongs to the venom metalloproteinase (M12B) family. P-II subfamily. P-IIa sub-subfamily. Monomer. Expressed by the venom gland.

Its subcellular location is the secreted. In terms of biological role, inhibits fibrinogen interaction with platelets. Acts by binding to alpha-IIb/beta-3 (ITGA2B/ITGB3) on the platelet surface and inhibits aggregation induced by ADP, thrombin, platelet-activating factor and collagen. This is Disintegrin halysin from Gloydius blomhoffii (Mamushi).